Here is a 142-residue protein sequence, read N- to C-terminus: Large ribosomal subunit protein uL13 (142 aa).

This sequence belongs to the universal ribosomal protein uL13 family. In terms of assembly, part of the 50S ribosomal subunit.

Its function is as follows. This protein is one of the early assembly proteins of the 50S ribosomal subunit, although it is not seen to bind rRNA by itself. It is important during the early stages of 50S assembly. This Coxiella burnetii (strain CbuK_Q154) (Coxiella burnetii (strain Q154)) protein is Large ribosomal subunit protein uL13.